The following is a 167-amino-acid chain: Nucleoside diphosphate kinase (167 aa).

Residues K11, R92, T98, R109, and N129 each contribute to the ATP site. The active-site Pros-phosphohistidine intermediate is H132.

The protein belongs to the NDK family. In terms of assembly, homotetramer. The cofactor is Mg(2+).

It localises to the cytoplasm. The catalysed reaction is a 2'-deoxyribonucleoside 5'-diphosphate + ATP = a 2'-deoxyribonucleoside 5'-triphosphate + ADP. It catalyses the reaction a ribonucleoside 5'-diphosphate + ATP = a ribonucleoside 5'-triphosphate + ADP. Major role in the synthesis of nucleoside triphosphates other than ATP. The ATP gamma phosphate is transferred to the NDP beta phosphate via a ping-pong mechanism, using a phosphorylated active-site intermediate. This Borreliella burgdorferi (strain ATCC 35210 / DSM 4680 / CIP 102532 / B31) (Borrelia burgdorferi) protein is Nucleoside diphosphate kinase (ndk).